The primary structure comprises 462 residues: Argininosuccinate lyase (462 aa).

This sequence belongs to the lyase 1 family. Argininosuccinate lyase subfamily.

The protein resides in the cytoplasm. The enzyme catalyses 2-(N(omega)-L-arginino)succinate = fumarate + L-arginine. Its pathway is amino-acid biosynthesis; L-arginine biosynthesis; L-arginine from L-ornithine and carbamoyl phosphate: step 3/3. This is Argininosuccinate lyase from Leuconostoc citreum (strain KM20).